The primary structure comprises 326 residues: Myeloid protein 1 (326 aa).

The signal sequence occupies residues 1 to 18 (MPALSLIALLSLVSTAFA). 2 consecutive repeat copies span residues 28 to 162 (QQGR…SDPT) and 177 to 312 (QQDA…SDPT). Cystine bridges form between Cys-37-Cys-74, Cys-48-Cys-53, and Cys-113-Cys-156. Residues His-67, Asp-71, and His-152 each coordinate Zn(2+). Residues 307–326 (DRSDPTSNLERGKGESEMEV) are disordered.

The protein belongs to the LECT2/MIM-1 family. Post-translationally, substrate for arginine-specific ADP-ribosyltransferase.

The protein resides in the cytoplasmic granule. This Gallus gallus (Chicken) protein is Myeloid protein 1 (MIM1).